A 270-amino-acid chain; its full sequence is Putative methylsterol monooxygenase DDB_G0269788 (270 aa).

3 consecutive transmembrane segments (helical) span residues 31-51, 82-102, and 110-130; these read FIAHEVFYFGSFIPFFLCDFM, IFVQLPMMYIFDPAIKAIGLS, and IPYLIFTIACCFLIEDFYFYW. A Fatty acid hydroxylase domain is found at 118–249; that stretch reads ACCFLIEDFY…FTYLDKIFGT (132 aa). Positions 132–136 match the Histidine box-1 motif; the sequence is HRALH. Residues 145 to 149 carry the Histidine box-2 motif; it reads HKVHH. The Histidine box-3 signature appears at 224–230; it reads FHDFHHE.

Belongs to the sterol desaturase family. The cofactor is Fe cation.

The protein resides in the endoplasmic reticulum membrane. The enzyme catalyses 4,4-dimethyl-5alpha-cholest-7-en-3beta-ol + 6 Fe(II)-[cytochrome b5] + 3 O2 + 5 H(+) = 4alpha-carboxy-4beta-methyl-5alpha-cholest-7-ene-3beta-ol + 6 Fe(III)-[cytochrome b5] + 4 H2O. It functions in the pathway steroid biosynthesis; zymosterol biosynthesis; zymosterol from lanosterol: step 3/6. This Dictyostelium discoideum (Social amoeba) protein is Putative methylsterol monooxygenase DDB_G0269788.